Reading from the N-terminus, the 434-residue chain is Glutamyl-tRNA reductase (434 aa).

Substrate is bound by residues 49–52 (TCNR), serine 109, 114–116 (EPQ), and glutamine 120. Cysteine 50 acts as the Nucleophile in catalysis. An NADP(+)-binding site is contributed by 189-194 (GAGEMA).

The protein belongs to the glutamyl-tRNA reductase family. As to quaternary structure, homodimer.

It carries out the reaction (S)-4-amino-5-oxopentanoate + tRNA(Glu) + NADP(+) = L-glutamyl-tRNA(Glu) + NADPH + H(+). It functions in the pathway porphyrin-containing compound metabolism; protoporphyrin-IX biosynthesis; 5-aminolevulinate from L-glutamyl-tRNA(Glu): step 1/2. Functionally, catalyzes the NADPH-dependent reduction of glutamyl-tRNA(Glu) to glutamate 1-semialdehyde (GSA). The protein is Glutamyl-tRNA reductase of Desulfatibacillum aliphaticivorans.